We begin with the raw amino-acid sequence, 98 residues long: NADH-ubiquinone oxidoreductase chain 4L (98 aa).

3 consecutive transmembrane segments (helical) span residues 1–21 (MTPV…GLAF), 29–49 (ALLC…LWAL), and 58–78 (VAPM…LALL).

This sequence belongs to the complex I subunit 4L family.

The protein resides in the mitochondrion membrane. The catalysed reaction is a ubiquinone + NADH + 5 H(+)(in) = a ubiquinol + NAD(+) + 4 H(+)(out). Functionally, core subunit of the mitochondrial membrane respiratory chain NADH dehydrogenase (Complex I) which catalyzes electron transfer from NADH through the respiratory chain, using ubiquinone as an electron acceptor. Part of the enzyme membrane arm which is embedded in the lipid bilayer and involved in proton translocation. The chain is NADH-ubiquinone oxidoreductase chain 4L (MT-ND4L) from Salmo salar (Atlantic salmon).